Reading from the N-terminus, the 212-residue chain is Uridine kinase (212 aa).

13 to 20 (GGSGSGKT) contacts ATP.

Belongs to the uridine kinase family.

The protein resides in the cytoplasm. It carries out the reaction uridine + ATP = UMP + ADP + H(+). The catalysed reaction is cytidine + ATP = CMP + ADP + H(+). It participates in pyrimidine metabolism; CTP biosynthesis via salvage pathway; CTP from cytidine: step 1/3. The protein operates within pyrimidine metabolism; UMP biosynthesis via salvage pathway; UMP from uridine: step 1/1. The sequence is that of Uridine kinase from Bacillus anthracis (strain A0248).